A 91-amino-acid chain; its full sequence is uncharacterized protein (91 aa).

Positions 1-20 are cleaved as a signal peptide; the sequence is MFSRVLALLAVLLLSANTWA.

The protein belongs to the BhsA/McbA family.

The protein resides in the periplasm. This is an uncharacterized protein from Escherichia coli O157:H7.